The following is a 177-amino-acid chain: Large ribosomal subunit protein uL6 (177 aa).

This sequence belongs to the universal ribosomal protein uL6 family. As to quaternary structure, part of the 50S ribosomal subunit.

This protein binds to the 23S rRNA, and is important in its secondary structure. It is located near the subunit interface in the base of the L7/L12 stalk, and near the tRNA binding site of the peptidyltransferase center. This is Large ribosomal subunit protein uL6 from Pseudomonas fluorescens (strain SBW25).